Here is a 156-residue protein sequence, read N- to C-terminus: Snaclec A11 (156 aa).

Residues 1-23 form the signal peptide; that stretch reads MGRSISVSFGLLVVFLSLSGTGA. Intrachain disulfides connect cysteine 27-cysteine 38, cysteine 55-cysteine 154, and cysteine 129-cysteine 146. In terms of domain architecture, C-type lectin spans 34-155; the sequence is YDQHCYQAVD…CGQPYRFTCE (122 aa).

The protein belongs to the snaclec family. In terms of assembly, heterodimer; disulfide-linked. In terms of tissue distribution, expressed by the venom gland.

Its subcellular location is the secreted. In terms of biological role, interferes with one step of hemostasis (modulation of platelet aggregation, or coagulation cascade, for example). This Macrovipera lebetinus (Levantine viper) protein is Snaclec A11.